We begin with the raw amino-acid sequence, 212 residues long: Probable GTP-binding protein EngB (212 aa).

The 175-residue stretch at 23 to 197 (TGIEVAFAGR…ERILDGWFGL (175 aa)) folds into the EngB-type G domain. Residues 31–38 (GRSNAGKS), 58–62 (GRTQL), 76–79 (DLPG), 143–146 (TKAD), and 176–178 (FSS) contribute to the GTP site. The Mg(2+) site is built by serine 38 and threonine 60.

The protein belongs to the TRAFAC class TrmE-Era-EngA-EngB-Septin-like GTPase superfamily. EngB GTPase family. The cofactor is Mg(2+).

Functionally, necessary for normal cell division and for the maintenance of normal septation. This Alteromonas mediterranea (strain DSM 17117 / CIP 110805 / LMG 28347 / Deep ecotype) protein is Probable GTP-binding protein EngB.